The following is a 201-amino-acid chain: Oligoribonuclease (201 aa).

One can recognise an Exonuclease domain in the interval 20–183 (LVWLDMEMTG…ADIHESIDEL (164 aa)). Y141 is an active-site residue.

It belongs to the oligoribonuclease family.

Its subcellular location is the cytoplasm. Its function is as follows. 3'-to-5' exoribonuclease specific for small oligoribonucleotides. This is Oligoribonuclease from Burkholderia pseudomallei (strain 1106a).